Reading from the N-terminus, the 204-residue chain is Holliday junction resolvase RecU (204 aa).

Mg(2+) is bound by residues Thr89, Asp91, Asp104, and Gln123.

It belongs to the RecU family. The cofactor is Mg(2+).

Its subcellular location is the cytoplasm. The catalysed reaction is Endonucleolytic cleavage at a junction such as a reciprocal single-stranded crossover between two homologous DNA duplexes (Holliday junction).. In terms of biological role, endonuclease that resolves Holliday junction intermediates in genetic recombination. Cleaves mobile four-strand junctions by introducing symmetrical nicks in paired strands. Promotes annealing of linear ssDNA with homologous dsDNA. Required for DNA repair, homologous recombination and chromosome segregation. This chain is Holliday junction resolvase RecU, found in Leuconostoc mesenteroides subsp. mesenteroides (strain ATCC 8293 / DSM 20343 / BCRC 11652 / CCM 1803 / JCM 6124 / NCDO 523 / NBRC 100496 / NCIMB 8023 / NCTC 12954 / NRRL B-1118 / 37Y).